The primary structure comprises 237 residues: Beta-glucanase (237 aa).

A signal peptide spans 1-23 (MKKKSCFTLVTTFAFSLIFSVSA). In terms of domain architecture, GH16 spans 28-237 (VFWEPLSYFN…EYDWVKYTSN (210 aa)). Residues cysteine 55 and cysteine 84 are joined by a disulfide bond. The active-site Nucleophile is glutamate 128. Glutamate 132 acts as the Proton donor in catalysis.

The protein belongs to the glycosyl hydrolase 16 family.

It carries out the reaction Hydrolysis of (1-&gt;4)-beta-D-glucosidic linkages in beta-D-glucans containing (1-&gt;3)- and (1-&gt;4)-bonds.. The protein is Beta-glucanase of Paenibacillus macerans (Bacillus macerans).